We begin with the raw amino-acid sequence, 324 residues long: tRNA dimethylallyltransferase (324 aa).

17–24 (GPTASGKT) contacts ATP. 19 to 24 (TASGKT) is a binding site for substrate. Interaction with substrate tRNA regions lie at residues 42–45 (DSAL), 166–170 (QRIQR), 251–256 (RCVGYR), and 284–291 (KRQITWLR).

This sequence belongs to the IPP transferase family. In terms of assembly, monomer. Requires Mg(2+) as cofactor.

The catalysed reaction is adenosine(37) in tRNA + dimethylallyl diphosphate = N(6)-dimethylallyladenosine(37) in tRNA + diphosphate. Functionally, catalyzes the transfer of a dimethylallyl group onto the adenine at position 37 in tRNAs that read codons beginning with uridine, leading to the formation of N6-(dimethylallyl)adenosine (i(6)A). The protein is tRNA dimethylallyltransferase of Burkholderia lata (strain ATCC 17760 / DSM 23089 / LMG 22485 / NCIMB 9086 / R18194 / 383).